A 54-amino-acid chain; its full sequence is Ribulose bisphosphate carboxylase large chain (54 aa).

A propeptide spanning residues 1-2 (MS) is cleaved from the precursor. Proline 3 carries the N-acetylproline modification. Lysine 14 carries the post-translational modification N6,N6,N6-trimethyllysine.

Belongs to the RuBisCO large chain family. Type I subfamily. Heterohexadecamer of 8 large chains and 8 small chains.

The protein resides in the plastid. Its subcellular location is the chloroplast. The enzyme catalyses 2 (2R)-3-phosphoglycerate + 2 H(+) = D-ribulose 1,5-bisphosphate + CO2 + H2O. The catalysed reaction is D-ribulose 1,5-bisphosphate + O2 = 2-phosphoglycolate + (2R)-3-phosphoglycerate + 2 H(+). Functionally, ruBisCO catalyzes two reactions: the carboxylation of D-ribulose 1,5-bisphosphate, the primary event in carbon dioxide fixation, as well as the oxidative fragmentation of the pentose substrate in the photorespiration process. Both reactions occur simultaneously and in competition at the same active site. The polypeptide is Ribulose bisphosphate carboxylase large chain (rbcL) (Geum borisii (Avens)).